The chain runs to 319 residues: Probable secreted beta-glucosidase C2G2.17c (319 aa).

An N-terminal signal peptide occupies residues 1 to 19 (MLFNNFLCFAVSAIPLVSA). Asn36, Asn39, Asn45, Asn48, and Asn221 each carry an N-linked (GlcNAc...) asparagine glycan.

Belongs to the SUN family.

The protein localises to the secreted. In terms of biological role, cell surface beta-glucosidase involved in cell wall biogenesis. This Schizosaccharomyces pombe (strain 972 / ATCC 24843) (Fission yeast) protein is Probable secreted beta-glucosidase C2G2.17c.